The chain runs to 265 residues: Type III pantothenate kinase (265 aa).

Position 6-13 (6-13 (DVGNTHTV)) interacts with ATP. Position 112-115 (112-115 (GADR)) interacts with substrate. The Proton acceptor role is filled by Asp-114. A K(+)-binding site is contributed by Asp-134. An ATP-binding site is contributed by Thr-137. Thr-189 provides a ligand contact to substrate.

Belongs to the type III pantothenate kinase family. Homodimer. Requires NH4(+) as cofactor. K(+) serves as cofactor.

Its subcellular location is the cytoplasm. The enzyme catalyses (R)-pantothenate + ATP = (R)-4'-phosphopantothenate + ADP + H(+). The protein operates within cofactor biosynthesis; coenzyme A biosynthesis; CoA from (R)-pantothenate: step 1/5. In terms of biological role, catalyzes the phosphorylation of pantothenate (Pan), the first step in CoA biosynthesis. The protein is Type III pantothenate kinase of Streptomyces coelicolor (strain ATCC BAA-471 / A3(2) / M145).